The primary structure comprises 301 residues: Ubiquitin thioesterase OTU1 (301 aa).

The segment at 5–83 (RCKAKNGTHL…IVEEEKNKPK (79 aa)) is UBX-like. The region spanning 102–227 (VERRVVPADN…GIHYDPLQKV (126 aa)) is the OTU domain. The tract at residues 107 to 113 (VPADNSC) is cys-loop. Residue D110 is part of the active site. The active-site Nucleophile is the C113. The variable-loop stretch occupies residues 166–176 (IRRDDTWGGAI). Residues 216 to 220 (YDGIH) form a his-loop region. I219 is a binding site for substrate. H220 is a catalytic residue. Residues 244-249 (DVILAQ) are S2 site. Residues 271–295 (LRCMVCQTGLVGQKEAREHAKETGH) form a C2H2-type zinc finger. H295 is a catalytic residue.

Its subcellular location is the cytoplasm. The enzyme catalyses Thiol-dependent hydrolysis of ester, thioester, amide, peptide and isopeptide bonds formed by the C-terminal Gly of ubiquitin (a 76-residue protein attached to proteins as an intracellular targeting signal).. In terms of biological role, hydrolase that can remove conjugated ubiquitin from proteins and participates in endoplasmic reticulum-associated degradation (ERAD) for misfolded lumenal proteins. May act by triming the ubiquitin chain on the associated substrate to facilitate their threading through the VCP/p97 pore. Ubiquitin moieties on substrates may present a steric impediment to the threading process when the substrate is transferred to the VCP pore and threaded through VCP's axial channel. Mediates deubiquitination of 'Lys-27'-, 'Lys-29'- and 'Lys-33'-linked polyubiquitin chains. Also able to hydrolyze 'Lys-11'-linked ubiquitin chains. Cleaves both polyubiquitin and di-ubiquitin. This Danio rerio (Zebrafish) protein is Ubiquitin thioesterase OTU1 (yod1).